Consider the following 286-residue polypeptide: Movement protein (286 aa).

It belongs to the tenuiviruses pc4 protein family. Interacts with the rice proteins DJA6 and HSP17.9A.

Its subcellular location is the host cytoplasm. Transports viral genome to neighboring plant cells directly through plasmosdesmata, without any budding. The movement protein allows efficient cell to cell propagation, by bypassing the host cell wall barrier. The chain is Movement protein from Avena sativa (Oat).